Here is a 456-residue protein sequence, read N- to C-terminus: ATP synthase subunit beta 1 (456 aa).

152-159 (GGAGVGKS) contributes to the ATP binding site.

Belongs to the ATPase alpha/beta chains family. In terms of assembly, F-type ATPases have 2 components, CF(1) - the catalytic core - and CF(0) - the membrane proton channel. CF(1) has five subunits: alpha(3), beta(3), gamma(1), delta(1), epsilon(1). CF(0) has three main subunits: a(1), b(2) and c(9-12). The alpha and beta chains form an alternating ring which encloses part of the gamma chain. CF(1) is attached to CF(0) by a central stalk formed by the gamma and epsilon chains, while a peripheral stalk is formed by the delta and b chains.

The protein resides in the cell membrane. The catalysed reaction is ATP + H2O + 4 H(+)(in) = ADP + phosphate + 5 H(+)(out). Produces ATP from ADP in the presence of a proton gradient across the membrane. The catalytic sites are hosted primarily by the beta subunits. This is ATP synthase subunit beta 1 from Listeria welshimeri serovar 6b (strain ATCC 35897 / DSM 20650 / CCUG 15529 / CIP 8149 / NCTC 11857 / SLCC 5334 / V8).